Here is a 416-residue protein sequence, read N- to C-terminus: S-layer protein B (416 aa).

The first 20 residues, 1-20 (MKYNLLPLILLSLLVAPLLA), serve as a signal peptide directing secretion. The stretch at 310-330 (IASLNSTIQSLESQISSLSST) forms a coiled coil. The helical transmembrane segment at 392 to 412 (IALAVSIIAIIISIVVLILVF) threads the bilayer.

This sequence belongs to the Sulfolobales SlaB family. The mushroom-shaped unit cells of the Sulfolobales' S-layers may consist of three SlaB subunits and six SlaA subunits.

It localises to the secreted. Its subcellular location is the cell wall. The protein localises to the S-layer. It is found in the cell membrane. S-layer small protein. May anchor the complex to the cell membrane. In Metallosphaera sedula (strain ATCC 51363 / DSM 5348 / JCM 9185 / NBRC 15509 / TH2), this protein is S-layer protein B.